Here is a 99-residue protein sequence, read N- to C-terminus: MALTKADMTETLYQELGLNKREAKEIVEMFFEDIRCALEQGEAVKLSGFGNFELRDKGERPGRNPKTGEEIPITARRVVTFRPGQKLKARVEAYAGGKQ.

Belongs to the bacterial histone-like protein family. In terms of assembly, heterodimer of an alpha and a beta chain.

Its function is as follows. This protein is one of the two subunits of integration host factor, a specific DNA-binding protein that functions in genetic recombination as well as in transcriptional and translational control. The sequence is that of Integration host factor subunit alpha from Nitrosococcus oceani (strain ATCC 19707 / BCRC 17464 / JCM 30415 / NCIMB 11848 / C-107).